The chain runs to 341 residues: TERF1-interacting nuclear factor 2 (341 aa).

Position 2 is an N-acetylalanine (alanine 2). The TBM signature appears at 243 to 265; the sequence is HRFNLAPLGKRKSRSHWTSAKAC. The Nuclear localization signal motif lies at 249-255; it reads PLGKRKS. The tract at residues 283–341 is disordered; that stretch reads PAQDLSNPKSREEPGAASAASVGTEPVCTEEAKTPSRPLGKRALEETPPDSPAASRRTV.

In terms of assembly, monomer. Found in a complex with POT1; TERF1 and TNKS1. Component of the shelterin complex (telosome) composed of TERF1, TERF2, TINF2, TERF2IP, ACD and POT1. Interacts with TERF1.

The protein localises to the nucleus. Its subcellular location is the chromosome. The protein resides in the telomere. Functionally, component of the shelterin complex (telosome) that is involved in the regulation of telomere length and protection. Shelterin associates with arrays of double-stranded TTAGGG repeats added by telomerase and protects chromosome ends; without its protective activity, telomeres are no longer hidden from the DNA damage surveillance and chromosome ends are inappropriately processed by DNA repair pathways. Plays a role in shelterin complex assembly. This chain is TERF1-interacting nuclear factor 2 (Tinf2), found in Mus musculus (Mouse).